The following is a 339-amino-acid chain: Trace amine-associated receptor 2 (339 aa).

Residues 1–36 (MTSFEAQQETFDCSEYGNGSCPENERSLGVRAAMYS) are Extracellular-facing. Residue Asn18 is glycosylated (N-linked (GlcNAc...) asparagine). 2 disulfide bridges follow: Cys21/Cys185 and Cys104/Cys189. A helical transmembrane segment spans residues 37 to 57 (LMAGAIFITIFGNLVMIISIS). Over 58 to 67 (YFKQLHTPTN) the chain is Cytoplasmic. Residues 68-88 (LLILSMAVTDFLLGFTIMPYS) traverse the membrane as a helical segment. At 89–106 (MVRSVENCWYFGLTFCKI) the chain is on the extracellular side. A helical membrane pass occupies residues 107–127 (HYSFDLMLSITSIFHLCSVAI). The Cytoplasmic segment spans residues 128–150 (DRFYAICHPLHYCTKMTIPVVKR). Residues 151 to 171 (LLLVCWSVPGAFAFGVVFSEA) traverse the membrane as a helical segment. Residues 172 to 195 (YADGIEGYDILVACSSSCPVMFNK) are Extracellular-facing. Residues 196–216 (LWGTTLFVAGFFTPSSMMVGI) traverse the membrane as a helical segment. The Cytoplasmic portion of the chain corresponds to 217–251 (YGKIFAVSKKHARVIDNLPENQNNQMRKDKKAAKT). The chain crosses the membrane as a helical span at residues 252 to 272 (LGIVMGVFLLCWFPCFFTILL). Residues 273-287 (DPFLNFSTPAILFDA) are Extracellular-facing. A glycan (N-linked (GlcNAc...) asparagine) is linked at Asn277. Residues 288 to 310 (LTWFGYFNSTCNPLIYGFFYPWF) traverse the membrane as a helical segment. Topologically, residues 311-339 (RRALRYILLGKIFSSHFHNTNLFTQKETE) are cytoplasmic.

It belongs to the G-protein coupled receptor 1 family.

The protein localises to the cell membrane. Orphan olfactory receptor specific for trace amines. Trace amine compounds are enriched in animal body fluids and act on trace amine-associated receptors (TAARs) to elicit both intraspecific and interspecific innate behaviors. Ligand-binding causes a conformation change that triggers signaling via the G(s)-class of G-proteins which activate adenylate cyclase. May also be required to provide olfactory input into limbic brain areas to regulate emotional behaviors likely via modulation of the dopamine system. In Rattus norvegicus (Rat), this protein is Trace amine-associated receptor 2 (Taar2).